The primary structure comprises 420 residues: Protein disulfide isomerase Creld1 (420 aa).

An N-terminal signal peptide occupies residues M1 to L29. Topologically, residues Q30 to E362 are extracellular. The CXXC motif lies at C46–C49. Cystine bridges form between C46/C49, C155/C169, C163/C181, and C183/C192. An EGF-like 1 domain is found at L153 to G193. N205 is a glycosylation site (N-linked (GlcNAc...) asparagine). FU repeat units lie at residues H208–T255 and S268–P315. The CXXC signature appears at C278–C281. Disulfide bonds link C278-C281, C309-C321, C314-C330, and C332-C343. The EGF-like 2; calcium-binding domain occupies D305–I342. The chain crosses the membrane as a helical span at residues M363–A383. Position 384 (K384) is a topological domain, cytoplasmic. Residues G385–L405 form a helical membrane-spanning segment. At S406–R420 the chain is on the extracellular side.

Belongs to the CRELD family.

The protein resides in the membrane. It catalyses the reaction Catalyzes the rearrangement of -S-S- bonds in proteins.. Protein disulfide isomerase. Promotes the localization of acetylcholine receptors (AChRs) to the plasma membrane. The polypeptide is Protein disulfide isomerase Creld1 (Creld1) (Rattus norvegicus (Rat)).